Consider the following 1142-residue polypeptide: Enamelin (1142 aa).

Residues 1 to 39 (MLVLRCRLGTSFPKLDNLVPKGKMKILLVFLGLLGNSVA) form the signal peptide. 6 disordered regions span residues 88–193 (QYQM…ISNE), 214–326 (YYSE…PNIR), 398–671 (PANL…QNRW), 874–955 (CCAG…LRRN), 1020–1048 (VIGT…QQQR), and 1062–1092 (LAKH…PTEN). Over residues 103-114 (HPRKSSAPKRHN) the composition is skewed to basic residues. 2 N-linked (GlcNAc...) asparagine glycosylation sites follow: Asn114 and Asn126. Positions 117 to 128 (DQTQETQKPNQT) are enriched in polar residues. Low complexity predominate over residues 140–162 (KQPSHNQPQPEEEAQPPQAFPPF). Residues 170-186 (QQPPWQIPQRLPPPGYG) show a composition bias toward pro residues. Ser191 and Ser216 each carry phosphoserine. The span at 223–234 (DFEKPKEEDPPK) shows a compositional bias: basic and acidic residues. The span at 240–285 (TEPTANSTVTETNSTQPNPKGSQGGNDTSPTGNSTPGLNTGNNPPA) shows a compositional bias: polar residues. N-linked (GlcNAc...) asparagine glycosylation is found at Asn245, Asn252, Asn265, and Asn296. Over residues 429–442 (RNEKIQNPKEKPLG) the composition is skewed to basic and acidic residues. Polar residues-rich tracts occupy residues 452-470 (KNPT…NKSN), 507-516 (SDGQTQSQNL), and 531-544 (SETN…SSYQ). Asn467 is a glycosylation site (N-linked (GlcNAc...) asparagine). A glycan (N-linked (GlcNAc...) asparagine) is linked at Asn534. The span at 556–588 (AKEHFPAGRNTWDHQEISPPFKEDPGRQEEHLP) shows a compositional bias: basic and acidic residues. Residues 652-661 (NEEDPVDPTG) are compositionally biased toward acidic residues. Polar residues predominate over residues 924-934 (SPTSILPGQRN). Residue Asn934 is glycosylated (N-linked (GlcNAc...) asparagine). The segment covering 935 to 951 (SSEKRESQNPFRDDVST) has biased composition (basic and acidic residues). Asn1040 is a glycosylation site (N-linked (GlcNAc...) asparagine). Over residues 1068-1078 (STTGTPSSDGR) the composition is skewed to polar residues.

In terms of processing, phosphorylated by FAM20C in vitro. In terms of tissue distribution, expressed in tooth particularly in odontoblast, ameloblast and cementoblast.

It is found in the secreted. Its subcellular location is the extracellular space. The protein resides in the extracellular matrix. Functionally, involved in the mineralization and structural organization of enamel. Involved in the extension of enamel during the secretory stage of dental enamel formation. This Homo sapiens (Human) protein is Enamelin (ENAM).